Consider the following 375-residue polypeptide: D-apiose dehydrogenase (375 aa).

29–30 (FF) is an NAD(+) binding site. Residues Trp-38, Arg-39, Ile-41, and Ala-44 each coordinate Mg(2+). NAD(+)-binding positions include Asp-51, Ser-93, 111–112 (QK), Asn-140, and 179–181 (QPY). Substrate is bound at residue Lys-112. Substrate is bound by residues Gln-179, Asp-192, His-196, and Tyr-246.

This sequence belongs to the Gfo/Idh/MocA family.

It catalyses the reaction D-apiofuranose + NAD(+) = D-apionolactone + NADH + H(+). It participates in carbohydrate metabolism. Its function is as follows. Involved in catabolism of D-apiose. Catalyzes oxidation of D-apiose to D-apionolactone. This is D-apiose dehydrogenase from Paraburkholderia graminis (strain ATCC 700544 / DSM 17151 / LMG 18924 / NCIMB 13744 / C4D1M).